A 1033-amino-acid polypeptide reads, in one-letter code: MTARMISIYGLVLASMMASVWASSSRFQRLPQSQSVVENESVKFECESTDSYSELHYDWLHNGHRIAYDKRVHQIGSNLHIEAARRTEDVGSYVCIATNLASGAREASPPAKLSVIYLESASVQLLGSNRNELLLKCHVEGASGDSEPLEIEWYRNSEKLSTWKNVQLDQHRLIIRQPGSDDDGLYRCTASNAAGRVMSKQGYAYQSSVKCLPRLARRKNQKMMESWDKQTFLCRGKRGGAAGLEALPAAPEDLRIVQGPVGQSIIKEGEPTALTCLYELPDELKNQRIQLRWRKDGKLLRQVELGGSAPITGHSFDSGKDALLREDARLVLHKQNGTLSFASIIASDAGQYQCQLQLEGHLPISSTPGVLEVIEQLKFVPQPTSKNLELDAVVAKVHCKAQGTPTPQVQWVRDGENSTLPDQVEVDANGTLIFRNVNSEHRGNYTCLASNTQGQINATVAINVVVTPKFSVPPVGPIETSEQGTVVMHCQAIGDPKPTIQWDKDLKYLSENNTDRERFRFLENGTLEIRNVQVEDEGSYGCTIGNSAGLKREDVQLVVKTTGDGFAPEESGGDGFLVTRAVLITMTVALAYIVLVVGLMLWCRYRRQARKARLNDLSTKEAGGDQPDAAGNGKGSEQEPCLSKQHNGHSKSRSKSSGDAQKSDDTACSQQSRASKKSAHIYEQLALPRSGLSELIQIGRGEFGDVFVGKLKATLVTSPTDKDADTEKQHSNSENGSGGSGSGSTTLSTLNEKRRSKTSMDDIEEIKEEEQEQHNQSALEQLVLVKALNKVKDEQACQEFRRQLDLLRAISHKGVVRLFGLCREKDPHYMVLEYTDWGDLKQFLLATAGKVNTATAGSSSPPPLTTSQVLAVAYQIARGMDAIYRARFTHRDLATRNCVISSEFIVKVSYPALCKDKYSREYHKHRNTLLPIRWLAPECIQEDEYTTKSDIFAYGVVVWELFNQATKLPHEELTNEQVVQRSQAGSLEWSVAEATPDSLREILLSCWVSNPKERPSFSQLGAALSKAMQSVEK.

The first 22 residues, 1–22 (MTARMISIYGLVLASMMASVWA), serve as a signal peptide directing secretion. Topologically, residues 23 to 581 (SSSRFQRLPQ…GGDGFLVTRA (559 aa)) are extracellular. Ig-like C2-type domains follow at residues 25-108 (SRFQ…REAS), 109-199 (PPAK…RVMS), 251-365 (PEDL…LPIS), 368-463 (PGVL…VAIN), and 468-558 (PKFS…VQLV). Asn39 carries an N-linked (GlcNAc...) asparagine glycan. 4 cysteine pairs are disulfide-bonded: Cys46–Cys95, Cys137–Cys188, Cys276–Cys354, and Cys399–Cys447. N-linked (GlcNAc...) asparagine glycosylation is found at Asn336, Asn417, Asn429, Asn444, Asn457, Asn512, and Asn524. Cysteines 490 and 542 form a disulfide. The helical transmembrane segment at 582 to 602 (VLITMTVALAYIVLVVGLMLW) threads the bilayer. Residues 603–1033 (CRYRRQARKA…LSKAMQSVEK (431 aa)) lie on the Cytoplasmic side of the membrane. Disordered stretches follow at residues 617–679 (LSTK…KKSA) and 718–760 (SPTD…KTSM). The span at 655 to 673 (KSSGDAQKSDDTACSQQSR) shows a compositional bias: polar residues. Ser678 is subject to Phosphoserine. In terms of domain architecture, Protein kinase; inactive spans 692 to 1028 (LSELIQIGRG…QLGAALSKAM (337 aa)). A compositionally biased stretch (basic and acidic residues) spans 720 to 731 (TDKDADTEKQHS).

It belongs to the protein kinase superfamily. Tyr protein kinase family. Insulin receptor subfamily. As to quaternary structure, interacts with plexA; component of a receptor complex that mediates the repulsive signaling in response to Semaphorin ligands.

Its subcellular location is the cell membrane. Functionally, acts as a calcium-dependent, homophilic cell adhesion molecule that regulates neural recognition during the development of the nervous system. Component of the repulsive Plexin signaling response to regulate motor axon guidance at the embryonic stage. Also component of a receptor complex that is required in the adult visual system to innervate the lamina layer; specific targeting of R1-R6 axons. This Drosophila erecta (Fruit fly) protein is Tyrosine-protein kinase-like otk.